The sequence spans 408 residues: CST complex subunit STN1 (408 aa).

Positions 8-195 (MQCESSPKEE…KVYDQPFRNP (188 aa)) are interaction with CTC1. The segment at residues 64–165 (VDIMGAVISV…EICATIYYKV (102 aa)) is a DNA-binding region (OB). Winged helix-turn-helix (wHTH) stretches follow at residues 201-304 (EALN…YVTS) and 305-408 (KDKD…YTAF).

Belongs to the STN1 family. In terms of assembly, component of the CST complex, composed of TEN1/C17orf106, CTC1/C17orf68 and STN1; in the complex interacts directly with TEN1 and CTC1. Interacts with ACD/TPP1, POT1 and POLA1.

The protein resides in the nucleus. It is found in the chromosome. Its subcellular location is the telomere. Functionally, component of the CST complex proposed to act as a specialized replication factor promoting DNA replication under conditions of replication stress or natural replication barriers such as the telomere duplex. The CST complex binds single-stranded DNA with high affinity in a sequence-independent manner, while isolated subunits bind DNA with low affinity by themselves. Initially the CST complex has been proposed to protect telomeres from DNA degradation. However, the CST complex has been shown to be involved in several aspects of telomere replication. The CST complex inhibits telomerase and is involved in telomere length homeostasis; it is proposed to bind to newly telomerase-synthesized 3' overhangs and to terminate telomerase action implicating the association with the ACD:POT1 complex thus interfering with its telomerase stimulation activity. The CST complex is also proposed to be involved in fill-in synthesis of the telomeric C-strand probably implicating recruitment and activation of DNA polymerase alpha. The CST complex facilitates recovery from many forms of exogenous DNA damage; seems to be involved in the re-initiation of DNA replication at repaired forks and/or dormant origins. Required for efficicient replication of the duplex region of the telomere. Promotes efficient replication of lagging-strand telomeres. Promotes general replication start following replication-fork stalling implicating new origin firing. May be in involved in C-strand fill-in during late S/G2 phase independent of its role in telomere duplex replication. The sequence is that of CST complex subunit STN1 from Rattus norvegicus (Rat).